A 749-amino-acid chain; its full sequence is Protein lin-54 homolog (749 aa).

Lys139 is covalently cross-linked (Glycyl lysine isopeptide (Lys-Gly) (interchain with G-Cter in SUMO2)). N6-acetyllysine occurs at positions 244 and 249. Phosphoserine is present on residues Ser264, Ser282, Ser310, and Ser314. Lys357 participates in a covalent cross-link: Glycyl lysine isopeptide (Lys-Gly) (interchain with G-Cter in SUMO2). The disordered stretch occupies residues 369-388 (ASSSTQPVSQNPSTNTQPLQ). The CRC domain occupies 521–634 (PRKPCNCTKS…KCIGCKNFEE (114 aa)). Residues 523–536 (KPCNCTKSLCLKLY) are DNA-binding. Zn(2+) contacts are provided by Cys525, Cys527, Cys532, Cys537, Cys539, Cys546, Cys549, Cys551, and Cys554. Positions 583-596 (IGKGKEGESDRRHS) are linker. 9 residues coordinate Zn(2+): Cys599, Cys601, Cys606, Cys611, Cys613, Cys620, Cys624, Cys626, and Cys629. Residues 599–612 (CNCKRSGCLKNYCE) form a DNA-binding region. At Ser635 the chain carries Phosphoserine. Residues Lys639, Lys659, and Lys661 each participate in a glycyl lysine isopeptide (Lys-Gly) (interchain with G-Cter in SUMO2) cross-link.

The protein belongs to the lin-54 family. As to quaternary structure, component of the DREAM complex (also named LINC complex) at least composed of E2F4, E2F5, LIN9, LIN37, LIN52, LIN54, MYBL1, MYBL2, RBL1, RBL2, RBBP4, TFDP1 and TFDP2. The complex exists in quiescent cells where it represses cell cycle-dependent genes. It dissociates in S phase when LIN9, LIN37, LIN52 and LIN54 form a subcomplex that binds to MYBL2.

It is found in the nucleus. Its function is as follows. Component of the DREAM complex, a multiprotein complex that can both act as a transcription activator or repressor depending on the context. In G0 phase, the complex binds to more than 800 promoters and is required for repression of E2F target genes. In S phase, the complex selectively binds to the promoters of G2/M genes whose products are required for mitosis and participates in their cell cycle dependent activation. In the complex, acts as a DNA-binding protein that binds the promoter of CDK1 in a sequence-specific manner. Specifically recognizes the consensus motif 5'-TTYRAA-3' in target DNA. The polypeptide is Protein lin-54 homolog (LIN54) (Homo sapiens (Human)).